Consider the following 75-residue polypeptide: UPF0270 protein PP_1747 (75 aa).

The protein belongs to the UPF0270 family.

The polypeptide is UPF0270 protein PP_1747 (Pseudomonas putida (strain ATCC 47054 / DSM 6125 / CFBP 8728 / NCIMB 11950 / KT2440)).